Here is a 1107-residue protein sequence, read N- to C-terminus: Voltage-gated delayed rectifier potassium channel KCNH8 (1107 aa).

The Cytoplasmic segment spans residues 1–225 (MPVMKGLLAP…HFSTFKAGWD (225 aa)). The PAS domain occupies 18–90 (IATRFDGTHS…LQIEKSLEEK (73 aa)). The 53-residue stretch at 93–145 (FKGEIMFYKKNGSPFWCLLDIVPIKNEKGDVVLFLASFKDITDTKVKITPEDK) folds into the PAC domain. Residues 226–246 (WLILLATFYVAVTVPYNVCFI) traverse the membrane as a helical segment. Residues 247–255 (GNDDLSTTR) are Extracellular-facing. Residues 256 to 276 (STTVSDIAVEILFIIDIILNF) traverse the membrane as a helical segment. The Cytoplasmic portion of the chain corresponds to 277 to 298 (RTTYVSKSGQVIFEARSICIHY). The helical transmembrane segment at 299–319 (VTTWFIIDLIAALPFDLLYAF) threads the bilayer. Residue asparagine 320 is glycosylated (N-linked (GlcNAc...) asparagine). The Extracellular portion of the chain corresponds to 320 to 327 (NVTVVSLV). Residues 328–348 (HLLKTVRLLRLLRLLQKLDRY) form a helical; Voltage-sensor membrane-spanning segment. At 349 to 357 (SQHSTIVLT) the chain is on the cytoplasmic side. The helical transmembrane segment at 358-378 (LLMSMFALLAHWMACIWYVIG) threads the bilayer. Topologically, residues 379 to 419 (KMEREDNSLLKWEVGWLHELGKRLESPYYGNNTLGGPSIRS) are extracellular. Asparagine 409 carries an N-linked (GlcNAc...) asparagine glycan. Positions 420 to 440 (AYIAALYFTLSSLTSVGFGNV) form an intramembrane region, pore-forming. Residues 434 to 439 (SVGFGN) carry the Selectivity filter motif. Residues 441-448 (SANTDAEK) are Extracellular-facing. The chain crosses the membrane as a helical span at residues 449–469 (IFSICTMLIGALMHALVFGNV). At 470-1107 (TAIIQRMYSR…EVKDNKAINV (638 aa)) the chain is on the cytoplasmic side. The tract at residues 551-668 (LFECASRGCL…HKFVEDIQHD (118 aa)) is cNMP-binding domain. Over residues 686-702 (SNKSMVSQSEPKGNGNI) the composition is skewed to polar residues. Disordered stretches follow at residues 686-742 (SNKS…NKKV), 764-791 (HSPIRVSRSNSPKTKQEIDPPNHNKRKE), 818-847 (EDGNSSEESQTFDFGSERIRSEPRISPPLG), and 961-989 (VDPSSVGSSPQRTGAHEQNPADSELYHSP). Residues 710–724 (VEDEEEEEEGEEEEA) are compositionally biased toward acidic residues. The span at 961 to 972 (VDPSSVGSSPQR) shows a compositional bias: polar residues.

This sequence belongs to the potassium channel family. H (Eag) (TC 1.A.1.20) subfamily. Kv12.1/KCNH8 sub-subfamily. The potassium channel is probably composed of a homo- or heterotetrameric complex of pore-forming alpha subunits that can associate with modulating beta subunits. As to expression, primarily expressed in the nervous system.

It localises to the membrane. The enzyme catalyses K(+)(in) = K(+)(out). In terms of biological role, pore-forming (alpha) subunit of a voltage-gated delayed rectifier potassium channel that mediates outward-rectifying potassium currents. Elicits a slowly activating, non-inactivating and slowly deactivation outwards potassium current at depolarizating voltages from -30 mV to +50mV. Shows no obvious change in the activation rate from different holding potentials. Activation is strongly dependent on the pH of the external solution. In Homo sapiens (Human), this protein is Voltage-gated delayed rectifier potassium channel KCNH8.